A 203-amino-acid polypeptide reads, in one-letter code: Endo-type membrane-bound lytic murein transglycosylase A (203 aa).

Positions 1 to 15 (MKLRWFAFLVVLLAG) are cleaved as a signal peptide. A lipid anchor (N-palmitoyl cysteine) is attached at C16. A lipid anchor (S-diacylglycerol cysteine) is attached at C16.

The protein belongs to the transglycosylase Slt family.

It localises to the cell outer membrane. It carries out the reaction Endolytic cleavage of the (1-&gt;4)-beta-glycosidic linkage between N-acetylmuramic acid (MurNAc) and N-acetylglucosamine (GlcNAc) residues in peptidoglycan with concomitant formation of a 1,6-anhydrobond in the MurNAc residue.. Its function is as follows. Murein-degrading enzyme. May play a role in recycling of muropeptides during cell elongation and/or cell division. Preferentially cleaves at a distance of more than two disaccharide units from the ends of the glycan chain. This chain is Endo-type membrane-bound lytic murein transglycosylase A, found in Escherichia fergusonii (strain ATCC 35469 / DSM 13698 / CCUG 18766 / IAM 14443 / JCM 21226 / LMG 7866 / NBRC 102419 / NCTC 12128 / CDC 0568-73).